The primary structure comprises 190 residues: High affinity copper uptake protein 1 (190 aa).

Positions 1 to 35 are disordered; sequence MDHSHHMGMSYMDSNSTMQPSHHHPTTSASHSHGG. Residues 1–61 are Extracellular-facing; the sequence is MDHSHHMGMS…KNVELLFSGL (61 aa). The Bis-His motif signature appears at 5 to 6; it reads HH. The Methionine segments (Mets) motif motif lies at 7-12; sequence MGMSYM. Asn15 is a glycosylation site (N-linked (GlcNAc...) asparagine). A compositionally biased stretch (low complexity) spans 26-35; the sequence is TTSASHSHGG. O-linked (GalNAc...) threonine glycosylation is present at Thr27. Residues 62-82 traverse the membrane as a helical segment; sequence VINTAGEMAGAFVAVFLLAMF. Over 83–132 the chain is Cytoplasmic; sequence YEGLKIARESLLRKSQVSIRYNSMPVPGPNGTILMETHKTVGQQMLSFPH. Thr114 is subject to Phosphothreonine. The chain crosses the membrane as a helical span at residues 133–153; the sequence is LLQTVLHIIQVVISYFLMLIF. The Extracellular segment spans residues 154–156; that stretch reads MTY. A helical transmembrane segment spans residues 157 to 177; that stretch reads NGYLCIAVAAGAGTGYFLFSW. Over 178–190 the chain is Cytoplasmic; that stretch reads KKAVVVDITEHCH. Cys189 carries the cysteine sulfenic acid (-SOH) modification.

Belongs to the copper transporter (Ctr) (TC 1.A.56) family. SLC31A subfamily. Homotrimer; is stabilized by cisplatin via interactions between cisplatin and the methionine-rich clusters, and could be crucial for the copper(2+) reduction process and copper(1+) stabilization. Heterotrimer between SLC31A1, CCS and SOD1; this heterotrimer is copper(1+)-mediated and its maintenance is regulated through SOD1 activation. Interacts with KDR; this interaction is induced upon VEGFA stimulation leading to SLC31A1 and KDR subsequent co-internalization to early endosomes, thereby activating KDR downstream signaling in endothelial cells. Interacts (via C-terminal domain) with ATOX1 (via dimer form); this interaction improves ATOX1 stability and controls intracellular copper(1+) levels. Interacts with SLC31A2; this interaction stabilizes SLC31A2 and protects its from ubiquitination and degradation. Interacts (via C-terminal domain) with CCS; this interaction is copper(1+)-mediated. In terms of processing, O-Glycosylation at Thr-27 protects from proteolytic cleavage in the N-terminal extracellular domain. Proteolytic cleavage, leading to a truncated form, is facilitated by SLC31A2 and initiated preferentially by CTSL and to a minor extend by CTSB in endolysosomal compartments. In vitro, is cleaved by CTSL/cathepsin L between residues 8 and 9 from the amino terminus. A post-CTSL/cathepsin L processing occurs to yield to the fully truncated form. Post-translationally, sulfenylated at Cys-189 after stimulation with VEGFA, which induces SLC31A1-KDR disulfide bond formation and their co-internalization to early endosomes, driving to a sustained VEGFR2 signaling.

It is found in the cell membrane. The protein resides in the early endosome membrane. It localises to the recycling endosome membrane. The protein localises to the apical cell membrane. Its subcellular location is the late endosome membrane. It is found in the basolateral cell membrane. The catalysed reaction is Ag(+)(out) = Ag(+)(in). The enzyme catalyses Cu(+)(out) = Cu(+)(in). Copper(1+) transport is stimulated by extracellular acidic pH and high potassium ions concentrations. Copper(1+) import is regulated by a copper(1+)-dependent recycling of SLC31A1. Uniporter that mediates the transport of copper(1+) from the extracellular space to the cytoplasm, across the plasma membrane and delivers directly copper(1+) to specific chaperone such as ATOX1, via a copper(1+)- mediated transient interaction between the C-terminal domain and a copper(1+) chaperone, thus controlling intracellular copper(1+) levels. May function in copper(1+) import from the apical membrane thus may drive intestinal copper absorption. The copper(1+) transport mechanism is sodium-independent, saturable and of high-affinity. Also mediates the uptake of silver(1+). May function in the influx of the platinum-containing chemotherapeutic agents. The platinum-containing chemotherapeutic agents uptake is saturable. In vitro, mediates the transport of cadmium(2+) into cells. Also participates in the first step of copper(2+) acquisition by cells through a direct transfer of copper(2+) from copper(2+) carriers in blood, such as ALB to the N-terminal domain of SLC31A1, leading to copper(2+) reduction and probably followed by copper(1+) stabilization. In addition, functions as a redox sensor to promote angiogenesis in endothelial cells, in a copper(1+) transport independent manner, by transmitting the VEGF-induced ROS signal through a sulfenylation at Cys-189 leadin g to a subsequent disulfide bond formation between SLC31A1 and KDR. The SLC31A1-KDR complex is then co-internalized to early endosomes, driving a sustained VEGFR2 signaling. Its function is as follows. Mobilizes copper(1+) out of the endosomal compartment, making copper(1+) available for export out of the cells. This Homo sapiens (Human) protein is High affinity copper uptake protein 1.